A 447-amino-acid chain; its full sequence is Probable glycine dehydrogenase (decarboxylating) subunit 1 (447 aa).

It belongs to the GcvP family. N-terminal subunit subfamily. The glycine cleavage system is composed of four proteins: P, T, L and H. In this organism, the P 'protein' is a heterodimer of two subunits.

It carries out the reaction N(6)-[(R)-lipoyl]-L-lysyl-[glycine-cleavage complex H protein] + glycine + H(+) = N(6)-[(R)-S(8)-aminomethyldihydrolipoyl]-L-lysyl-[glycine-cleavage complex H protein] + CO2. Functionally, the glycine cleavage system catalyzes the degradation of glycine. The P protein binds the alpha-amino group of glycine through its pyridoxal phosphate cofactor; CO(2) is released and the remaining methylamine moiety is then transferred to the lipoamide cofactor of the H protein. The polypeptide is Probable glycine dehydrogenase (decarboxylating) subunit 1 (Bacillus anthracis (strain A0248)).